The chain runs to 319 residues: MHTKILGTGSYVPVQVRSNQDLEKMVETSDQWIVERTGISERRIAAQDETVSTMGYLAALNALEMAGIEASDLDMIICGTTSAANAFPAAACEIQAMLGVHTIPAFDIAAACSGFVYALSVADQFVKNGTAKKVLVIGADVLSRLCEPEDRTTIILFGDGAGAAIIGASDEPGIISTHIYADGRQGDLLKCAFPPRQGETSEAVGFMTMKGNDVFKVAVTQLSHVVTETLRLNNIDKSEIDWLVPHQANFRIINATAKKLDMSLDKVVLTLAKHGNTSAASVPIALDEAVRDGRIQRGQLLLLEAFGAGFAWGSALVRF.

Residues C112 and H246 contribute to the active site. An ACP-binding region spans residues 247–251 (QANFR). N276 is an active-site residue.

It belongs to the thiolase-like superfamily. FabH family. Homodimer.

The protein resides in the cytoplasm. The enzyme catalyses malonyl-[ACP] + acetyl-CoA + H(+) = 3-oxobutanoyl-[ACP] + CO2 + CoA. It participates in lipid metabolism; fatty acid biosynthesis. Its function is as follows. Catalyzes the condensation reaction of fatty acid synthesis by the addition to an acyl acceptor of two carbons from malonyl-ACP. Catalyzes the first condensation reaction which initiates fatty acid synthesis and may therefore play a role in governing the total rate of fatty acid production. Possesses both acetoacetyl-ACP synthase and acetyl transacylase activities. Its substrate specificity determines the biosynthesis of branched-chain and/or straight-chain of fatty acids. The protein is Beta-ketoacyl-[acyl-carrier-protein] synthase III of Shewanella oneidensis (strain ATCC 700550 / JCM 31522 / CIP 106686 / LMG 19005 / NCIMB 14063 / MR-1).